Reading from the N-terminus, the 304-residue chain is Acetaldehyde dehydrogenase 2 (304 aa).

Cys-131 serves as the catalytic Acyl-thioester intermediate. NAD(+) contacts are provided by residues 162–170 and Asn-273; that span reads SAGPGTRKN.

This sequence belongs to the acetaldehyde dehydrogenase family.

It carries out the reaction acetaldehyde + NAD(+) + CoA = acetyl-CoA + NADH + H(+). In Dechloromonas aromatica (strain RCB), this protein is Acetaldehyde dehydrogenase 2.